The following is a 138-amino-acid chain: uncharacterized protein (138 aa).

The HTH merR-type domain maps to 3 to 72 (LYSISKAAEK…LEDINEFVKD (70 aa)). Positions 6–25 (ISKAAEKTSISSYTLRYYEK) form a DNA-binding region, H-T-H motif.

This is an uncharacterized protein from Bacillus subtilis (strain 168).